Consider the following 365-residue polypeptide: Phosphatidylcholine:ceramide cholinephosphotransferase 4 (365 aa).

The Cytoplasmic portion of the chain corresponds to 1–44; the sequence is MISYPFFSLSPPGLVPPPMAVPPVEMYSGSFWNRMRKPLPLRTQ. The helical transmembrane segment at 45–65 threads the bilayer; sequence VIRFTVVFVIVSFILAVALQI. The Lumenal portion of the chain corresponds to 66–92; the sequence is THERMPDPKVTKPLPDLGFELLTKVPG. Residues 93–113 form a helical membrane-spanning segment; that stretch reads MYVLADCCIGFLNILSVFTAF. The Cytoplasmic segment spans residues 114 to 165; that stretch reads KLYLLHRHCVGSGEPELPCNIPGVSRFFLSVWLCKENCRIELRNVHTIAWIR. A helical membrane pass occupies residues 166–186; that stretch reads FITSYALLLLFRSVVIVMTSL. The Lumenal segment spans residues 187–229; sequence PAPDDLCQDPPKIENPVKNVILTVLTAGGGSIHCGDLMYSGHT. His228 is a catalytic residue. A helical membrane pass occupies residues 230–250; it reads VILTLHLMFHWIYGAMVHWSF. Position 251 (Arg251) is a topological domain, cytoplasmic. Residues 252 to 272 traverse the membrane as a helical segment; that stretch reads PVVTVVAIFGYYCIVASRFHY. Catalysis depends on residues His271 and Asp275. Residues 273 to 275 are Lumenal-facing; it reads TDD. A helical transmembrane segment spans residues 276–296; that stretch reads VLVAIYLTIATFIAVGHNADG. The Cytoplasmic portion of the chain corresponds to 297 to 365; sequence APWQLQLFIR…ALMFKCGAYV (69 aa).

This sequence belongs to the sphingomyelin synthase family.

The protein localises to the golgi apparatus membrane. The catalysed reaction is an N-acylsphing-4-enine + a 1,2-diacyl-sn-glycero-3-phosphocholine = a sphingomyelin + a 1,2-diacyl-sn-glycerol. Functionally, bidirectional lipid cholinephosphotransferase capable of converting phosphatidylcholine (PC) and ceramide to sphingomyelin (SM) and diacylglycerol (DAG) and vice versa. Direction is dependent on the relative concentrations of DAG and ceramide as phosphocholine acceptors. Directly and specifically recognizes the choline head group on the substrate. Also requires two fatty chains on the choline-P donor molecule in order to be recognized efficiently as a substrate. Does not function strictly as a SM synthase. Essential for viability of the pathogenic bloodstream stage of this human protozoan parasite and, consequently, can be considered as potential drug target. In Trypanosoma brucei brucei (strain 927/4 GUTat10.1), this protein is Phosphatidylcholine:ceramide cholinephosphotransferase 4.